Here is a 256-residue protein sequence, read N- to C-terminus: Ribonuclease HII (256 aa).

In terms of domain architecture, RNase H type-2 spans 72 to 256 (ALICGIDEVG…TFEPIKSLVN (185 aa)). 3 residues coordinate a divalent metal cation: aspartate 78, glutamate 79, and aspartate 170.

Belongs to the RNase HII family. Requires Mn(2+) as cofactor. It depends on Mg(2+) as a cofactor.

The protein resides in the cytoplasm. The catalysed reaction is Endonucleolytic cleavage to 5'-phosphomonoester.. Endonuclease that specifically degrades the RNA of RNA-DNA hybrids. The polypeptide is Ribonuclease HII (Staphylococcus saprophyticus subsp. saprophyticus (strain ATCC 15305 / DSM 20229 / NCIMB 8711 / NCTC 7292 / S-41)).